A 70-amino-acid chain; its full sequence is MFTLKKSMLLLFFLGTINLSLCEQERNADEEERRDDDEMDVEVEKRFLPMLAGLAANFLPKLFCKITKKC.

An N-terminal signal peptide occupies residues 1–22 (MFTLKKSMLLLFFLGTINLSLC). The propeptide occupies 23-44 (EQERNADEEERRDDDEMDVEVE). Cysteines 64 and 70 form a disulfide.

Belongs to the frog skin active peptide (FSAP) family. Brevinin subfamily. As to expression, expressed by the skin glands.

The protein localises to the secreted. Its function is as follows. Antimicrobial peptide with activity against a variety of Gram-negative and Gram-positive bacteria and against fungi. Shows strong hemolytic activity against human erythrocytes. This Amolops mantzorum (Sichuan torrent frog) protein is Brevinin-1MT2.